A 212-amino-acid chain; its full sequence is Outer-membrane lipoprotein carrier protein (212 aa).

Residues 1–25 form the signal peptide; the sequence is MRKRILVSACAALAVFAAHMPTALA.

It belongs to the LolA family. In terms of assembly, monomer.

It is found in the periplasm. Its function is as follows. Participates in the translocation of lipoproteins from the inner membrane to the outer membrane. Only forms a complex with a lipoprotein if the residue after the N-terminal Cys is not an aspartate (The Asp acts as a targeting signal to indicate that the lipoprotein should stay in the inner membrane). This is Outer-membrane lipoprotein carrier protein from Cupriavidus pinatubonensis (strain JMP 134 / LMG 1197) (Cupriavidus necator (strain JMP 134)).